We begin with the raw amino-acid sequence, 281 residues long: 2,3,4,5-tetrahydropyridine-2,6-dicarboxylate N-succinyltransferase (281 aa).

Residues Arg-108 and Asp-145 each contribute to the substrate site.

This sequence belongs to the transferase hexapeptide repeat family. Homotrimer.

It is found in the cytoplasm. The catalysed reaction is (S)-2,3,4,5-tetrahydrodipicolinate + succinyl-CoA + H2O = (S)-2-succinylamino-6-oxoheptanedioate + CoA. It functions in the pathway amino-acid biosynthesis; L-lysine biosynthesis via DAP pathway; LL-2,6-diaminopimelate from (S)-tetrahydrodipicolinate (succinylase route): step 1/3. This Nitrobacter winogradskyi (strain ATCC 25391 / DSM 10237 / CIP 104748 / NCIMB 11846 / Nb-255) protein is 2,3,4,5-tetrahydropyridine-2,6-dicarboxylate N-succinyltransferase.